The sequence spans 248 residues: MIKERVKMEVIGLEIPLISGNEDYTLAELISTYPLEDKDVIVIAETVVSKIEKNVILKNEITPSNEAMELSKKLGKEPEVVQVILDESNEIVKLGPNFIITETKHGFVCANSGVDESNTSKGIKPLPKNPDKSAEEIRMGIEKITGKKVGVIINDSMGRPFRKGSCGIAIGVSGVCGLWDRKGEKDLFGRELKTTEVGIADELAATASAVMGQSNEGIPLVIIRNAPVPFTNGTGKELIRKKEEDVFR.

Residues 15–18 (IPLI), 45–46 (ET), and Lys50 contribute to the GTP site. Residue Asp115 coordinates a divalent metal cation. Residue Asn118 participates in GTP binding. The a divalent metal cation site is built by Asp155, Ser156, and Gln213. GTP is bound at residue 211–218 (MGQSNEGI).

It belongs to the CofE family. As to quaternary structure, homodimer. It depends on Mg(2+) as a cofactor. The cofactor is Mn(2+). Requires K(+) as cofactor.

The enzyme catalyses oxidized coenzyme F420-0 + GTP + L-glutamate = oxidized coenzyme F420-1 + GDP + phosphate + H(+). It catalyses the reaction oxidized coenzyme F420-1 + GTP + L-glutamate = oxidized coenzyme F420-2 + GDP + phosphate + H(+). It functions in the pathway cofactor biosynthesis; coenzyme F420 biosynthesis. Its function is as follows. Catalyzes the GTP-dependent successive addition of two or more gamma-linked L-glutamates to the L-lactyl phosphodiester of 7,8-didemethyl-8-hydroxy-5-deazariboflavin (F420-0) to form coenzyme F420-0-glutamyl-glutamate (F420-2) or polyglutamated F420 derivatives. This chain is Coenzyme F420:L-glutamate ligase, found in Methanococcus maripaludis (strain DSM 14266 / JCM 13030 / NBRC 101832 / S2 / LL).